The following is a 109-amino-acid chain: MSEFKRIPPEQAQALREQGAVVVDVRDPATFAALHISGSKHLDNHSLHAFIQGADLDAPTVVVCYHGNSSQGAAAYLVSQGFSDVYSMDGGFELWRTTFPSETAQGTSE.

In terms of domain architecture, Rhodanese spans 16–104; that stretch reads REQGAVVVDV…WRTTFPSETA (89 aa). The Cysteine persulfide intermediate role is filled by cysteine 64.

It belongs to the GlpE family.

It is found in the cytoplasm. It carries out the reaction thiosulfate + hydrogen cyanide = thiocyanate + sulfite + 2 H(+). The enzyme catalyses thiosulfate + [thioredoxin]-dithiol = [thioredoxin]-disulfide + hydrogen sulfide + sulfite + 2 H(+). In terms of biological role, transferase that catalyzes the transfer of sulfur from thiosulfate to thiophilic acceptors such as cyanide or dithiols. May function in a CysM-independent thiosulfate assimilation pathway by catalyzing the conversion of thiosulfate to sulfite, which can then be used for L-cysteine biosynthesis. This chain is Thiosulfate sulfurtransferase GlpE, found in Pseudomonas fluorescens (strain Pf0-1).